The sequence spans 29 residues: Trypsin inhibitor 1 (29 aa).

3 disulfides stabilise this stretch: Cys-3/Cys-20, Cys-10/Cys-22, and Cys-16/Cys-28.

It belongs to the protease inhibitor I7 (squash-type serine protease inhibitor) family.

Its subcellular location is the secreted. In terms of biological role, inhibits trypsin. The protein is Trypsin inhibitor 1 of Momordica repens.